A 168-amino-acid chain; its full sequence is HTH-type transcriptional regulator IscR (168 aa).

In terms of domain architecture, HTH rrf2-type spans K2–V131. Positions L28 to K51 form a DNA-binding region, H-T-H motif. Residues C92, C98, and C104 each coordinate [2Fe-2S] cluster.

The cofactor is [2Fe-2S] cluster.

Regulates the transcription of several operons and genes involved in the biogenesis of Fe-S clusters and Fe-S-containing proteins. This Aliivibrio salmonicida (strain LFI1238) (Vibrio salmonicida (strain LFI1238)) protein is HTH-type transcriptional regulator IscR.